Here is a 200-residue protein sequence, read N- to C-terminus: Nitrile hydratase subunit alpha (200 aa).

Fe(3+)-binding residues include cysteine 105, cysteine 108, serine 109, and cysteine 110. Cysteine 108 carries the post-translational modification Cysteine sulfinic acid (-SO2H). The residue at position 110 (cysteine 110) is a Cysteine sulfenic acid (-SOH).

The protein belongs to the nitrile hydratase subunit alpha family. In terms of assembly, heterodimer of an alpha and a beta chain. Fe(3+) serves as cofactor. Oxidation on Cys-108 is essential for the activity. In terms of processing, oxidation on Cys-110 stabilizes the Fe-NO ligand coordinated in the inactive form.

The catalysed reaction is an aliphatic primary amide = an aliphatic nitrile + H2O. With respect to regulation, inactivated by oxidation of Cys-110 to a sulfenic acid. NHase catalyzes the hydration of various nitrile compounds to the corresponding amides. Industrial production of acrylamide is now being developed using some of the enzymes of this class. This Pseudomonas chlororaphis (Pseudomonas aureofaciens) protein is Nitrile hydratase subunit alpha (nthA).